Consider the following 142-residue polypeptide: Hemoglobin subunit alpha-A (142 aa).

Residues 2 to 142 (VLSPTDKSIV…VSTVLTSKYR (141 aa)) form the Globin domain. Histidine 59 contributes to the O2 binding site. Position 88 (histidine 88) interacts with heme b.

It belongs to the globin family. As to quaternary structure, heterotetramer of two alpha chains and two beta chains. Red blood cells.

Involved in oxygen transport from the lung to the various peripheral tissues. In Otolemur crassicaudatus (Brown greater galago), this protein is Hemoglobin subunit alpha-A (HBAA).